Consider the following 230-residue polypeptide: 2-C-methyl-D-erythritol 4-phosphate cytidylyltransferase (230 aa).

Belongs to the IspD/TarI cytidylyltransferase family. IspD subfamily.

The enzyme catalyses 2-C-methyl-D-erythritol 4-phosphate + CTP + H(+) = 4-CDP-2-C-methyl-D-erythritol + diphosphate. Its pathway is isoprenoid biosynthesis; isopentenyl diphosphate biosynthesis via DXP pathway; isopentenyl diphosphate from 1-deoxy-D-xylulose 5-phosphate: step 2/6. Functionally, catalyzes the formation of 4-diphosphocytidyl-2-C-methyl-D-erythritol from CTP and 2-C-methyl-D-erythritol 4-phosphate (MEP). This chain is 2-C-methyl-D-erythritol 4-phosphate cytidylyltransferase, found in Nocardia farcinica (strain IFM 10152).